A 178-amino-acid polypeptide reads, in one-letter code: Large ribosomal subunit protein eL20 (178 aa).

The protein belongs to the eukaryotic ribosomal protein eL20 family.

The protein is Large ribosomal subunit protein eL20 (RPL18A) of Oryza sativa subsp. japonica (Rice).